A 90-amino-acid polypeptide reads, in one-letter code: UPF0297 protein ABC1593 (90 aa).

This sequence belongs to the UPF0297 family.

This Shouchella clausii (strain KSM-K16) (Alkalihalobacillus clausii) protein is UPF0297 protein ABC1593.